Consider the following 244-residue polypeptide: Dihydropteridine reductase (244 aa).

The residue at position 2 (Ala2) is an N-acetylalanine. Residue 14–38 (LVYGGRGALGSRCVQAFRARNWWVA) coordinates NADP(+). Residues Lys73, Lys79, Lys96, and Lys102 each carry the N6-succinyllysine modification. Tyr150 acts as the Proton acceptor in catalysis.

It belongs to the short-chain dehydrogenases/reductases (SDR) family. As to quaternary structure, homodimer.

The enzyme catalyses 5,6,7,8-tetrahydropteridine + NAD(+) = 6,7-dihydropteridine + NADH + H(+). It catalyses the reaction 5,6,7,8-tetrahydropteridine + NADP(+) = 6,7-dihydropteridine + NADPH + H(+). Its function is as follows. Catalyzes the conversion of quinonoid dihydrobiopterin into tetrahydrobiopterin. This is Dihydropteridine reductase (QDPR) from Homo sapiens (Human).